A 370-amino-acid chain; its full sequence is MPPKRRLVDDADAMEDQDLYEPPASLPKLPGKFLQYTVGGSDPHPGIGHEKDIRQNAVALLDQSRRDMFHTVTPSLVFLCLLIPGLHAAFVHGGVPRESYLSTPVTRGEQTVVKTAKFYGEKTTQRDLTELEISSIFSHCCSLLIGVVIGSSSKIKAGAEQIKKRFKTMMAALNRPSHGETATLLQMFNPHEAIDWINGQPWVGSFVLSLLTTDFESPGKEFMDQIKLVASYAQMTTYTTIKEYLAECMDATLTIPVVAYEIRDFLEVSAKLKEDHADLFPFLGAIRHPDAIKLAPRSFPNLASAAFYWSKKENPTMAGYRASTIQPGASVKETQLARYRRREISRGEDGAELSGEISAIMKMIGVTGLN.

Positions 1 to 25 (MPPKRRLVDDADAMEDQDLYEPPAS) are disordered. A Nuclear localization signal motif is present at residues 3-11 (PKRRLVDDA). Residues 10 to 19 (DADAMEDQDL) are compositionally biased toward acidic residues. A Nuclear export signal motif is present at residues 128-141 (LTELEISSIFSHCC).

In terms of assembly, homomultimerizes to form the nucleocapsid. Binds to viral genomic RNA. Interacts with phosphoprotein P. Interacts with host CDK1; this interaction delays host cell cycle in late G2. Interacts with host NFKB1.

It is found in the virion. Its subcellular location is the host nucleus. The protein localises to the host cytoplasm. In terms of biological role, encapsidates the genome, protecting it from nucleases. The encapsidated genomic RNA is termed the NC and serves as template for transcription and replication. Plays a critical role in the nucleocytoplasmic transport of viral RNP by interaction with other viral proteins. The nuclear export signal is masked by the interaction with the phosphoprotein P. Delays the host cell cycle progression by interacting with the host CDK1-cyclin B1 phase in late G2. Inhibits host NF-kappaB activation. The polypeptide is Nucleoprotein (N) (Borna disease virus (strain V) (BDV)).